Reading from the N-terminus, the 174-residue chain is uncharacterized protein (174 aa).

This is an uncharacterized protein from Aquifex aeolicus (strain VF5).